The sequence spans 379 residues: 2-dehydropantoate 2-reductase (379 aa).

Residues 13–18 (GLGAMG) and N119 each bind NADP(+). Position 119 (N119) interacts with substrate. K224 (proton donor) is an active-site residue. Substrate is bound by residues N228, N232, and S316. Position 328 (E328) interacts with NADP(+).

This sequence belongs to the ketopantoate reductase family.

The catalysed reaction is (R)-pantoate + NADP(+) = 2-dehydropantoate + NADPH + H(+). The protein operates within cofactor biosynthesis; (R)-pantothenate biosynthesis; (R)-pantoate from 3-methyl-2-oxobutanoate: step 2/2. In terms of biological role, catalyzes the NADPH-dependent reduction of ketopantoate into pantoic acid. The chain is 2-dehydropantoate 2-reductase (PAN5) from Saccharomyces cerevisiae (strain ATCC 204508 / S288c) (Baker's yeast).